A 319-amino-acid chain; its full sequence is Ribonuclease Z (319 aa).

The Zn(2+) site is built by H62, H64, D66, H67, H139, D210, and H268. D66 serves as the catalytic Proton acceptor.

This sequence belongs to the RNase Z family. Homodimer. Zn(2+) is required as a cofactor.

It catalyses the reaction Endonucleolytic cleavage of RNA, removing extra 3' nucleotides from tRNA precursor, generating 3' termini of tRNAs. A 3'-hydroxy group is left at the tRNA terminus and a 5'-phosphoryl group is left at the trailer molecule.. Zinc phosphodiesterase, which displays some tRNA 3'-processing endonuclease activity. Probably involved in tRNA maturation, by removing a 3'-trailer from precursor tRNA. This Nostoc punctiforme (strain ATCC 29133 / PCC 73102) protein is Ribonuclease Z.